Reading from the N-terminus, the 379-residue chain is Probable pectin lyase B (379 aa).

Positions 1-20 are cleaved as a signal peptide; the sequence is MHYKLLFAAAAASLASAVSA. Intrachain disulfides connect cysteine 83/cysteine 102 and cysteine 92/cysteine 226. Residues asparagine 129 and asparagine 252 are each glycosylated (N-linked (GlcNAc...) asparagine). Arginine 256 is an active-site residue. Residues cysteine 323 and cysteine 331 are joined by a disulfide bond.

This sequence belongs to the polysaccharide lyase 1 family.

It localises to the secreted. The enzyme catalyses Eliminative cleavage of (1-&gt;4)-alpha-D-galacturonan methyl ester to give oligosaccharides with 4-deoxy-6-O-methyl-alpha-D-galact-4-enuronosyl groups at their non-reducing ends.. In terms of biological role, pectinolytic enzymes consist of four classes of enzymes: pectin lyase, polygalacturonase, pectin methylesterase and rhamnogalacturonase. Among pectinolytic enzymes, pectin lyase is the most important in depolymerization of pectin, since it cleaves internal glycosidic bonds of highly methylated pectins. This chain is Probable pectin lyase B (pelB), found in Aspergillus niger (strain ATCC MYA-4892 / CBS 513.88 / FGSC A1513).